The primary structure comprises 160 residues: Vesicle transport protein SFT2B (160 aa).

At Met1 the chain carries N-acetylmethionine. At 1–36 (MDKLKKVLSGQDTEDRSGLSEVVEASSLSWSTRIKG) the chain is on the cytoplasmic side. Position 9 is a phosphoserine (Ser9). A helical transmembrane segment spans residues 37–57 (FIACFAIGILCSLLGTVLLWV). At 58–63 (PRKGLH) the chain is on the lumenal side. The chain crosses the membrane as a helical span at residues 64–84 (LFAVFYTFGNIASIGSTIFLM). Residues 85–98 (GPVKQLKRMFEPTR) are Cytoplasmic-facing. A helical transmembrane segment spans residues 99-119 (LIATIMVLLCFALTLCSAFWW). At 120–123 (HNKG) the chain is on the lumenal side. The helical transmembrane segment at 124–144 (LALIFCILQSLALTWYSLSFI) threads the bilayer. Topologically, residues 145–160 (PFARDAVKKCFAVCLA) are cytoplasmic.

Belongs to the SFT2 family.

The protein localises to the membrane. Functionally, may be involved in fusion of retrograde transport vesicles derived from an endocytic compartment with the Golgi complex. This is Vesicle transport protein SFT2B from Homo sapiens (Human).